Reading from the N-terminus, the 205-residue chain is Ribosomal RNA small subunit methyltransferase G (205 aa).

Residues glycine 73, leucine 78, 124–125, and arginine 139 contribute to the S-adenosyl-L-methionine site; that span reads VE.

The protein belongs to the methyltransferase superfamily. RNA methyltransferase RsmG family.

It localises to the cytoplasm. The catalysed reaction is guanosine(527) in 16S rRNA + S-adenosyl-L-methionine = N(7)-methylguanosine(527) in 16S rRNA + S-adenosyl-L-homocysteine. Specifically methylates the N7 position of guanine in position 527 of 16S rRNA. This is Ribosomal RNA small subunit methyltransferase G from Methylobacillus flagellatus (strain ATCC 51484 / DSM 6875 / VKM B-1610 / KT).